The chain runs to 303 residues: Glutathione transport system permease protein GsiD (303 aa).

The next 6 helical transmembrane spans lie at alanine 40 to isoleucine 60, leucine 105 to leucine 125, leucine 144 to isoleucine 164, alanine 165 to glycine 185, isoleucine 222 to phenylalanine 242, and valine 266 to phenylalanine 286. One can recognise an ABC transmembrane type-1 domain in the interval alanine 101–glycine 290.

Belongs to the binding-protein-dependent transport system permease family. As to quaternary structure, the complex is composed of two ATP-binding proteins (GsiA), two transmembrane proteins (GsiC and GsiD) and a solute-binding protein (GsiB).

Its subcellular location is the cell inner membrane. Part of the ABC transporter complex GsiABCD involved in glutathione import. Probably responsible for the translocation of the substrate across the membrane. The protein is Glutathione transport system permease protein GsiD of Escherichia coli O1:K1 / APEC.